Reading from the N-terminus, the 95-residue chain is Small ribosomal subunit protein bS18 (95 aa).

The protein belongs to the bacterial ribosomal protein bS18 family. Part of the 30S ribosomal subunit. Forms a tight heterodimer with protein bS6.

Its function is as follows. Binds as a heterodimer with protein bS6 to the central domain of the 16S rRNA, where it helps stabilize the platform of the 30S subunit. This is Small ribosomal subunit protein bS18 from Rickettsia prowazekii (strain Madrid E).